The primary structure comprises 287 residues: MAASLWMGDLEPYMDENFISRAFATMGETVMSVKIIRNRLTGIPAGYCFVEFADLATAEKCLHKINGKPLPGATPAKRFKLNYATYGKQPDNSPEYSLFVGDLTPDVDDGMLYEFFVKVYPSCRGGKVVLDQTGVSKGYGFVKFTDELEQKRALTECQGAVGLGSKPVRLSVAIPKASRVKPVEYSQMYSYSYNQYYQQYQNYYAQWGYDQNTGSYSYSYPQYGYTQSTMQTYEEVGDDALEDPMPQLDVTEANKEFMEQSEELYDALMDCHWQPLDTVSSEIPAMM.

2 RRM domains span residues 3–86 and 96–175; these read ASLW…YATY and YSLF…VAIP.

It belongs to the RRM TRSPAP family. As to quaternary structure, component of the tRNA(Sec) complex composed at least of EEFSEC, SECISBP2, SEPHS1, SEPSECS, TRNAU1AP and tRNA(Sec). Found in a complex with tRNA(Sec). Interacts with SEPSECS. Associates with mRNP and/or polysomes. Found in a complex with EEFSEC, SECISBP2, TRNAU1AP and tRNA(Sec).

It localises to the nucleus. The protein localises to the cytoplasm. Involved in the early steps of selenocysteine biosynthesis and tRNA(Sec) charging to the later steps resulting in the cotranslational incorporation of selenocysteine into selenoproteins. Stabilizes the SECISBP2, EEFSEC and tRNA(Sec) complex. May be involved in the methylation of tRNA(Sec). Enhances efficiency of selenoproteins synthesis. The polypeptide is tRNA selenocysteine 1-associated protein 1 (TRNAU1AP) (Homo sapiens (Human)).